A 33-amino-acid polypeptide reads, in one-letter code: GTTCKCGSTLGIYWFAVTSCPPGRGYTTHCGYF.

An intrachain disulfide couples Cys6 to Cys30.

Its subcellular location is the secreted. It localises to the nematocyst. Functionally, potently and reversibly blocks mammalian Kv11/KCNH/ERG voltage-gated potassium channels. Acts as a gating-modifier toxin that shifts the voltage-dependence of ERG activation in the positive direction and suppresses its current amplitudes elicited by strong depolarizing pulses that maximally activate the channels. The protein is Toxin BcV of Bunodosoma caissarum (Sea anemone).